The sequence spans 336 residues: Holliday junction branch migration complex subunit RuvB (336 aa).

Positions 1 to 183 (MTEEHLTSQE…FGIVEHMQYY (183 aa)) are large ATPase domain (RuvB-L). ATP contacts are provided by residues Leu22, Arg23, Gly64, Lys67, Thr68, Thr69, 130–132 (EDF), Arg173, Tyr183, and Arg220. Residue Thr68 coordinates Mg(2+). The tract at residues 184–254 (QVEDLEKIIL…TTAMALKQLQ (71 aa)) is small ATPAse domain (RuvB-S). Residues 257-336 (SAGLDQTDRK…LNLPLPGEEE (80 aa)) are head domain (RuvB-H). Residues Arg293 and Arg317 each contribute to the DNA site.

This sequence belongs to the RuvB family. Homohexamer. Forms an RuvA(8)-RuvB(12)-Holliday junction (HJ) complex. HJ DNA is sandwiched between 2 RuvA tetramers; dsDNA enters through RuvA and exits via RuvB. An RuvB hexamer assembles on each DNA strand where it exits the tetramer. Each RuvB hexamer is contacted by two RuvA subunits (via domain III) on 2 adjacent RuvB subunits; this complex drives branch migration. In the full resolvosome a probable DNA-RuvA(4)-RuvB(12)-RuvC(2) complex forms which resolves the HJ.

It localises to the cytoplasm. It carries out the reaction ATP + H2O = ADP + phosphate + H(+). The RuvA-RuvB-RuvC complex processes Holliday junction (HJ) DNA during genetic recombination and DNA repair, while the RuvA-RuvB complex plays an important role in the rescue of blocked DNA replication forks via replication fork reversal (RFR). RuvA specifically binds to HJ cruciform DNA, conferring on it an open structure. The RuvB hexamer acts as an ATP-dependent pump, pulling dsDNA into and through the RuvAB complex. RuvB forms 2 homohexamers on either side of HJ DNA bound by 1 or 2 RuvA tetramers; 4 subunits per hexamer contact DNA at a time. Coordinated motions by a converter formed by DNA-disengaged RuvB subunits stimulates ATP hydrolysis and nucleotide exchange. Immobilization of the converter enables RuvB to convert the ATP-contained energy into a lever motion, pulling 2 nucleotides of DNA out of the RuvA tetramer per ATP hydrolyzed, thus driving DNA branch migration. The RuvB motors rotate together with the DNA substrate, which together with the progressing nucleotide cycle form the mechanistic basis for DNA recombination by continuous HJ branch migration. Branch migration allows RuvC to scan DNA until it finds its consensus sequence, where it cleaves and resolves cruciform DNA. The protein is Holliday junction branch migration complex subunit RuvB of Lactobacillus delbrueckii subsp. bulgaricus (strain ATCC 11842 / DSM 20081 / BCRC 10696 / JCM 1002 / NBRC 13953 / NCIMB 11778 / NCTC 12712 / WDCM 00102 / Lb 14).